The sequence spans 60 residues: MDPCDCAKTGTCNCGTSCTCANCSCTKCKKSCCECCPSGCSKCASGCACKDKTCDTNCCQ.

Residues 1-28 are beta; the sequence is MDPCDCAKTGTCNCGTSCTCANCSCTKC. Positions 4, 6, 12, 14, 18, 20, 23, 25, 28, 32, 33, 35, 36, 40, 43, 47, 49, 54, 58, and 59 each coordinate a divalent metal cation. The interval 29–60 is alpha; the sequence is KKSCCECCPSGCSKCASGCACKDKTCDTNCCQ.

This sequence belongs to the metallothionein superfamily. Type 1 family.

Its function is as follows. Metallothioneins have a high content of cysteine residues that bind various heavy metals. This is Metallothionein (mt) from Gadus morhua (Atlantic cod).